The chain runs to 117 residues: Ribosome-binding factor A (117 aa).

Belongs to the RbfA family. Monomer. Binds 30S ribosomal subunits, but not 50S ribosomal subunits or 70S ribosomes.

It is found in the cytoplasm. One of several proteins that assist in the late maturation steps of the functional core of the 30S ribosomal subunit. Associates with free 30S ribosomal subunits (but not with 30S subunits that are part of 70S ribosomes or polysomes). Required for efficient processing of 16S rRNA. May interact with the 5'-terminal helix region of 16S rRNA. The chain is Ribosome-binding factor A from Nitrosomonas europaea (strain ATCC 19718 / CIP 103999 / KCTC 2705 / NBRC 14298).